Consider the following 380-residue polypeptide: Chaperone protein DnaJ (380 aa).

A J domain is found at 5–70 (DYYEILGVAK…QKRAAYDQYG (66 aa)). The CR-type zinc-finger motif lies at 135–213 (GVSKEIRIPT…CHGHGRVEKS (79 aa)). Cys148, Cys151, Cys165, Cys168, Cys187, Cys190, Cys201, and Cys204 together coordinate Zn(2+). CXXCXGXG motif repeat units follow at residues 148–155 (CGVCHGSG), 165–172 (CSTCHGAG), 187–194 (CPTCHGRG), and 201–208 (CNACHGHG).

It belongs to the DnaJ family. In terms of assembly, homodimer. Zn(2+) is required as a cofactor.

Its subcellular location is the cytoplasm. Participates actively in the response to hyperosmotic and heat shock by preventing the aggregation of stress-denatured proteins and by disaggregating proteins, also in an autonomous, DnaK-independent fashion. Unfolded proteins bind initially to DnaJ; upon interaction with the DnaJ-bound protein, DnaK hydrolyzes its bound ATP, resulting in the formation of a stable complex. GrpE releases ADP from DnaK; ATP binding to DnaK triggers the release of the substrate protein, thus completing the reaction cycle. Several rounds of ATP-dependent interactions between DnaJ, DnaK and GrpE are required for fully efficient folding. Also involved, together with DnaK and GrpE, in the DNA replication of plasmids through activation of initiation proteins. The protein is Chaperone protein DnaJ of Erwinia tasmaniensis (strain DSM 17950 / CFBP 7177 / CIP 109463 / NCPPB 4357 / Et1/99).